The sequence spans 197 residues: MIGRISGLLLEKFPPLVLVDVQGVGYEIDVPMSTFYNLPAVGTQITLHTHFVVREDAHLLFGFATEGERQAFRQLVKISGVGARTALALLSGLSVADLHQTVSNQDPARLIRIPGIGKKTAERLLLELRDKLDLGVSAIPGAAGARRPSTMGSDVLNALLSLGYNDREANWAVSQLSVDLSVSDGIRQALKFLSKEK.

Residues Met-1–Ala-64 are domain I. The tract at residues Thr-65 to Ala-142 is domain II. Residues Ala-143–Ser-153 are flexible linker. Residues Ser-153–Lys-197 are domain III.

The protein belongs to the RuvA family. As to quaternary structure, homotetramer. Forms an RuvA(8)-RuvB(12)-Holliday junction (HJ) complex. HJ DNA is sandwiched between 2 RuvA tetramers; dsDNA enters through RuvA and exits via RuvB. An RuvB hexamer assembles on each DNA strand where it exits the tetramer. Each RuvB hexamer is contacted by two RuvA subunits (via domain III) on 2 adjacent RuvB subunits; this complex drives branch migration. In the full resolvosome a probable DNA-RuvA(4)-RuvB(12)-RuvC(2) complex forms which resolves the HJ.

It localises to the cytoplasm. In terms of biological role, the RuvA-RuvB-RuvC complex processes Holliday junction (HJ) DNA during genetic recombination and DNA repair, while the RuvA-RuvB complex plays an important role in the rescue of blocked DNA replication forks via replication fork reversal (RFR). RuvA specifically binds to HJ cruciform DNA, conferring on it an open structure. The RuvB hexamer acts as an ATP-dependent pump, pulling dsDNA into and through the RuvAB complex. HJ branch migration allows RuvC to scan DNA until it finds its consensus sequence, where it cleaves and resolves the cruciform DNA. The polypeptide is Holliday junction branch migration complex subunit RuvA (Nitrosospira multiformis (strain ATCC 25196 / NCIMB 11849 / C 71)).